Here is an 82-residue protein sequence, read N- to C-terminus: Sulfur carrier protein TusA (82 aa).

Residue Cys20 is the Cysteine persulfide intermediate of the active site.

The protein belongs to the sulfur carrier protein TusA family.

It is found in the cytoplasm. Functionally, sulfur carrier protein which probably makes part of a sulfur-relay system. In Aeromonas hydrophila subsp. hydrophila (strain ATCC 7966 / DSM 30187 / BCRC 13018 / CCUG 14551 / JCM 1027 / KCTC 2358 / NCIMB 9240 / NCTC 8049), this protein is Sulfur carrier protein TusA.